A 152-amino-acid polypeptide reads, in one-letter code: Cornifin-A (152 aa).

The segment at 20 to 40 (EVKQPCQPPPQEPCAPKTKEP) is disordered. 14 tandem repeats follow at residues 27–34 (PPPQEPCA), 35–42 (PKTKEPCH), 43–49 (PIPEPCN), 50–57 (PKVPEPCQ), 58–65 (PKVPEPCQ), 66–73 (PKVPEPCQ), 74–81 (PKVPEPCQ), 82–89 (PKVPEPCQ), 90–97 (PKVPEPCQ), 98–105 (PKVPEPCH), 106–113 (PKAPEPCH), 114–121 (PVVPEPCQ), 122–129 (PVAPEPCQ), and 130–137 (PVVPEPCP). The segment at 27–137 (PPPQEPCAPK…CQPVVPEPCP (111 aa)) is 14 X 8 AA approximate tandem repeats.

The protein belongs to the cornifin (SPRR) family. In squamous epithelia lining the nasal vestibule and in the hard palate.

Its subcellular location is the cytoplasm. Functionally, cross-linked envelope protein of keratinocytes. It is a keratinocyte protein that first appears in the cell cytosol, but ultimately becomes cross-linked to membrane proteins by transglutaminase. All that results in the formation of an insoluble envelope beneath the plasma membrane. The chain is Cornifin-A (Sprr1a) from Rattus norvegicus (Rat).